The following is a 515-amino-acid chain: Galactose/methyl galactoside import ATP-binding protein MglA (515 aa).

ABC transporter domains lie at 8–243 and 254–499; these read LEMR…VGRE and IPKE…AKYL. Position 40–47 (40–47) interacts with ATP; the sequence is GENGAGKS.

The protein belongs to the ABC transporter superfamily. Galactose/methyl galactoside importer (TC 3.A.1.2.3) family. The complex is composed of one ATP-binding protein (MglA), two transmembrane proteins (MglC) and a solute-binding protein (MglB).

It localises to the cell membrane. It carries out the reaction D-galactose(out) + ATP + H2O = D-galactose(in) + ADP + phosphate + H(+). The enzyme catalyses methyl beta-D-galactoside(out) + ATP + H2O = methyl beta-D-galactoside(in) + ADP + phosphate + H(+). In terms of biological role, part of the ABC transporter complex MglABC involved in galactose/methyl galactoside import. Responsible for energy coupling to the transport system. The sequence is that of Galactose/methyl galactoside import ATP-binding protein MglA from Clostridium perfringens (strain SM101 / Type A).